Here is a 442-residue protein sequence, read N- to C-terminus: C4-dicarboxylate transport protein 4 (442 aa).

6 helical membrane-spanning segments follow: residues 20-40, 53-73, 90-110, 160-180, 209-229, and 233-253; these read ILYVQVLIAIVLGVLIGYFYP, FIALIKMMIAPVIFCTVVHGI, LIYFESVSTVALAVGLLVGEV, GDLLQVLLISILSGFAIAFLG, PVGAFGAMAFTVGAYGLGSLL, and ALIGTFYLTSILFVLIVLGAI.

The protein belongs to the dicarboxylate/amino acid:cation symporter (DAACS) (TC 2.A.23) family.

It localises to the cell inner membrane. Responsible for the transport of dicarboxylates such as succinate, fumarate, and malate from the periplasm across the membrane. This Bradyrhizobium diazoefficiens (strain JCM 10833 / BCRC 13528 / IAM 13628 / NBRC 14792 / USDA 110) protein is C4-dicarboxylate transport protein 4.